The primary structure comprises 1026 residues: Multidrug resistance protein MdtC (1026 aa).

A run of 11 helical transmembrane segments spans residues 15-35 (ILIA…LPVA), 333-353 (EVEE…FLFL), 360-380 (LIPA…MYLC), 387-407 (LSLM…IVVL), 431-451 (VGFT…PLLL), 463-483 (FAVT…TLTP), 528-548 (LVGV…IAIP), 853-873 (LILI…LYES), 897-917 (LFNA…IGIV), 953-973 (PIMM…LSGG), and 984-1004 (ITIV…TPVV).

The protein belongs to the resistance-nodulation-cell division (RND) (TC 2.A.6) family. MdtC subfamily. Part of a tripartite efflux system composed of MdtA, MdtB and MdtC. MdtC forms a heteromultimer with MdtB.

It localises to the cell inner membrane. This is Multidrug resistance protein MdtC from Salmonella schwarzengrund (strain CVM19633).